A 339-amino-acid polypeptide reads, in one-letter code: Dihydroorotate dehydrogenase (quinone) (339 aa).

FMN-binding positions include 64 to 68 (AGADK) and T88. K68 lines the substrate pocket. A substrate-binding site is contributed by 113–117 (NRNGF). Residues N141 and N174 each coordinate FMN. N174 contributes to the substrate binding site. S177 functions as the Nucleophile in the catalytic mechanism. A substrate-binding site is contributed by N179. The FMN site is built by K219 and T247. Residue 248 to 249 (NT) coordinates substrate. Residues G270, G299, and 320–321 (YS) contribute to the FMN site.

This sequence belongs to the dihydroorotate dehydrogenase family. Type 2 subfamily. As to quaternary structure, monomer. Requires FMN as cofactor.

The protein resides in the cell membrane. It carries out the reaction (S)-dihydroorotate + a quinone = orotate + a quinol. It participates in pyrimidine metabolism; UMP biosynthesis via de novo pathway; orotate from (S)-dihydroorotate (quinone route): step 1/1. Functionally, catalyzes the conversion of dihydroorotate to orotate with quinone as electron acceptor. The polypeptide is Dihydroorotate dehydrogenase (quinone) (pyrD) (Pasteurella multocida (strain Pm70)).